A 201-amino-acid polypeptide reads, in one-letter code: 3-isopropylmalate dehydratase small subunit (201 aa).

Belongs to the LeuD family. LeuD type 1 subfamily. In terms of assembly, heterodimer of LeuC and LeuD.

It carries out the reaction (2R,3S)-3-isopropylmalate = (2S)-2-isopropylmalate. The protein operates within amino-acid biosynthesis; L-leucine biosynthesis; L-leucine from 3-methyl-2-oxobutanoate: step 2/4. In terms of biological role, catalyzes the isomerization between 2-isopropylmalate and 3-isopropylmalate, via the formation of 2-isopropylmaleate. In Shigella boydii serotype 18 (strain CDC 3083-94 / BS512), this protein is 3-isopropylmalate dehydratase small subunit.